The sequence spans 231 residues: UPF0758 protein aq_1610 (231 aa).

Residues 110–231 (SIRNPQEAFE…YFSFREEGVL (122 aa)) form the MPN domain. 3 residues coordinate Zn(2+): histidine 180, histidine 182, and aspartate 193. The JAMM motif motif lies at 180-193 (HNHPQGEPSPSNED).

The protein belongs to the UPF0758 family.

The chain is UPF0758 protein aq_1610 from Aquifex aeolicus (strain VF5).